A 79-amino-acid chain; its full sequence is Cytochrome b (79 aa).

The next 3 membrane-spanning stretches (helical) occupy residues 1–7 (SALFLAM), 31–52 (WLIR…YLHI), and 67–79 (WNIG…LTMA). Heme b contacts are provided by histidine 37 and histidine 51.

The protein belongs to the cytochrome b family. In terms of assembly, the cytochrome bc1 complex contains 11 subunits: 3 respiratory subunits (MT-CYB, CYC1 and UQCRFS1), 2 core proteins (UQCRC1 and UQCRC2) and 6 low-molecular weight proteins (UQCRH/QCR6, UQCRB/QCR7, UQCRQ/QCR8, UQCR10/QCR9, UQCR11/QCR10 and a cleavage product of UQCRFS1). This cytochrome bc1 complex then forms a dimer. Heme b is required as a cofactor.

It localises to the mitochondrion inner membrane. In terms of biological role, component of the ubiquinol-cytochrome c reductase complex (complex III or cytochrome b-c1 complex) that is part of the mitochondrial respiratory chain. The b-c1 complex mediates electron transfer from ubiquinol to cytochrome c. Contributes to the generation of a proton gradient across the mitochondrial membrane that is then used for ATP synthesis. The sequence is that of Cytochrome b (MT-CYB) from Dipodomys californicus (California kangaroo rat).